A 546-amino-acid chain; its full sequence is Chaperonin GroEL (546 aa).

ATP-binding positions include 29-32 (TMGP), lysine 50, 86-90 (DGTTT), glycine 414, and aspartate 492.

It belongs to the chaperonin (HSP60) family. In terms of assembly, forms a cylinder of 14 subunits composed of two heptameric rings stacked back-to-back. Interacts with the co-chaperonin GroES.

The protein localises to the cytoplasm. The enzyme catalyses ATP + H2O + a folded polypeptide = ADP + phosphate + an unfolded polypeptide.. In terms of biological role, together with its co-chaperonin GroES, plays an essential role in assisting protein folding. The GroEL-GroES system forms a nano-cage that allows encapsulation of the non-native substrate proteins and provides a physical environment optimized to promote and accelerate protein folding. This Helicobacter pylori (strain ATCC 700392 / 26695) (Campylobacter pylori) protein is Chaperonin GroEL.